The primary structure comprises 148 residues: Transcriptional regulator MraZ (148 aa).

2 SpoVT-AbrB domains span residues 5–51 and 80–123; these read VSIL…PEPN and AETL…NAEE.

Belongs to the MraZ family. Forms oligomers.

Its subcellular location is the cytoplasm. The protein resides in the nucleoid. This Chromobacterium violaceum (strain ATCC 12472 / DSM 30191 / JCM 1249 / CCUG 213 / NBRC 12614 / NCIMB 9131 / NCTC 9757 / MK) protein is Transcriptional regulator MraZ.